Here is a 552-residue protein sequence, read N- to C-terminus: MISKINGKLFADMIIQGAQNLSNNADLVDSLNVYPVPDGDTGTNMNLTITSGREEVENNLSQNIGELGKTFSKGLLMGARGNSGVILSQLFRGFCKNIEEEKEISVQQFAESFQAGVETAYKAVMKPVEGTILTVAKDAAKAAMDYVDQAEDCVDLMAHLIEAASESLDNTPNLLAVLKEVGVVDSGGKGLLCVYEGFLKGLKGEKIEAQAPKLDTESFVNDDHDFHGVINTEDIVYGYCTEMMVRFGKNKKAFDEQEFRNDMSEFGDSLLVINDDEIVKVHVHTEHPGDVFNYGQKYGELIKLKVENMREQHREVIRKEQDGLQNKEANESKTVETAIVTISVGDGIAELFKSMGATHIISGGQTMNPSTEDIVKVIEQSQCKRAIILPNNKNIMMASEQAASIVEAETVVIPTKSIPQGISALFQYDLESSLEDNKRHMSDALETVQSGSITFAVRDTKIDGIEIKKDEFMGLAEDKIVTSDVNQFHAVKGLLSKLLNEDSEILTMISGEDADNSITNQIINWIESEYPDVEVEQHEGGQPIYQYFFAVE.

Positions 8–200 (KLFADMIIQG…LLCVYEGFLK (193 aa)) constitute a DhaL domain.

This is an uncharacterized protein from Staphylococcus epidermidis (strain ATCC 12228 / FDA PCI 1200).